The sequence spans 333 residues: NADH-quinone oxidoreductase subunit H (333 aa).

The next 8 membrane-spanning stretches (helical) occupy residues 15–35, 88–108, 117–137, 159–179, 191–211, 239–259, 274–296, and 313–333; these read FFIFFGLAVLLLFAVLGFVTY, FILAPVIAFAPAFMVLAVIPF, IGVGLLYYIAVSGITTIGVVT, ISYEIPLVMSVIGIVLLAGSL, VWYIFVQPIGFVVFLIAAVAE, WAFFMLSEYVYFFGMASLITV, IPGAVWFALKFSSVVFLLIWFRV, and VLLPIALANIFLTALIKELFF.

The protein belongs to the complex I subunit 1 family. As to quaternary structure, NDH-1 is composed of 14 different subunits. Subunits NuoA, H, J, K, L, M, N constitute the membrane sector of the complex.

The protein localises to the cell membrane. It catalyses the reaction a quinone + NADH + 5 H(+)(in) = a quinol + NAD(+) + 4 H(+)(out). In terms of biological role, NDH-1 shuttles electrons from NADH, via FMN and iron-sulfur (Fe-S) centers, to quinones in the respiratory chain. The immediate electron acceptor for the enzyme in this species is believed to be ubiquinone. Couples the redox reaction to proton translocation (for every two electrons transferred, four hydrogen ions are translocated across the cytoplasmic membrane), and thus conserves the redox energy in a proton gradient. This subunit may bind ubiquinone. This Bacillus anthracis (strain A0248) protein is NADH-quinone oxidoreductase subunit H.